The chain runs to 248 residues: MAVGKDKRISKGKKGGKKKIVDPFSKKDWYDIKAPPRSRRARSGRRCHRTAGTKIASDGLNFRVFEVSLADLQNDEDQAFRKIKLRAEDVQGKNVLTNFWGMDFTTDKLRSLVRKWQSLIQAHVDVKTTDNYQIRIFCIAFTKKRPNHTRNFYAQSSQIAIRRKMREIMVKEAQTCDLKELVAKFIPEVIGKEIDEWRSQGIYPLQSTFIRKVKILKAPKFDLMKLMEVHGDYNEEVGAKIREASSRG.

A disordered region spans residues 1–21 (MAVGKDKRISKGKKGGKKKIV).

The protein belongs to the eukaryotic ribosomal protein eS1 family. In terms of assembly, component of the small ribosomal subunit. Mature ribosomes consist of a small (40S) and a large (60S) subunit. The 40S subunit contains about 33 different proteins and 1 molecule of RNA (18S). The 60S subunit contains about 49 different proteins and 3 molecules of RNA (25S, 5.8S and 5S).

Its subcellular location is the cytoplasm. The protein is Small ribosomal subunit protein eS1 of Syntrichia ruralis (Great hairy screw-moss).